The primary structure comprises 445 residues: 6-phosphogluconate dehydrogenase, decarboxylating (445 aa).

NADP(+) contacts are provided by residues 1–4 (AVMG), 22–24 (NRS), 63–65 (VQA), and N91. Substrate contacts are provided by residues N91 and 117-119 (SGG). The active-site Proton acceptor is the K172. 175–176 (HN) lines the substrate pocket. The active-site Proton donor is the E179. 5 residues coordinate substrate: Y180, K249, R276, R434, and H440.

Belongs to the 6-phosphogluconate dehydrogenase family. As to quaternary structure, homodimer.

It carries out the reaction 6-phospho-D-gluconate + NADP(+) = D-ribulose 5-phosphate + CO2 + NADPH. It participates in carbohydrate degradation; pentose phosphate pathway; D-ribulose 5-phosphate from D-glucose 6-phosphate (oxidative stage): step 3/3. Functionally, catalyzes the oxidative decarboxylation of 6-phosphogluconate to ribulose 5-phosphate and CO(2), with concomitant reduction of NADP to NADPH. The sequence is that of 6-phosphogluconate dehydrogenase, decarboxylating (gnd) from Pseudescherichia vulneris (Escherichia vulneris).